Reading from the N-terminus, the 335-residue chain is Beta-ketoacyl-[acyl-carrier-protein] synthase III (335 aa).

Catalysis depends on residues Cys-119 and His-261. Residues 262–266 (QANQR) form an ACP-binding region. Residue Asn-291 is part of the active site.

The protein belongs to the thiolase-like superfamily. FabH family. Homodimer.

It localises to the cytoplasm. It catalyses the reaction malonyl-[ACP] + acetyl-CoA + H(+) = 3-oxobutanoyl-[ACP] + CO2 + CoA. It functions in the pathway lipid metabolism; fatty acid biosynthesis. Its function is as follows. Catalyzes the condensation reaction of fatty acid synthesis by the addition to an acyl acceptor of two carbons from malonyl-ACP. Catalyzes the first condensation reaction which initiates fatty acid synthesis and may therefore play a role in governing the total rate of fatty acid production. Possesses both acetoacetyl-ACP synthase and acetyl transacylase activities. Its substrate specificity determines the biosynthesis of branched-chain and/or straight-chain of fatty acids. The chain is Beta-ketoacyl-[acyl-carrier-protein] synthase III from Prochlorococcus marinus subsp. pastoris (strain CCMP1986 / NIES-2087 / MED4).